The following is a 330-amino-acid chain: Trans-1,2-dihydrobenzene-1,2-diol dehydrogenase (330 aa).

It belongs to the Gfo/Idh/MocA family. Homodimer.

It carries out the reaction (1R,2R)-1,2-dihydrobenzene-1,2-diol + NADP(+) = catechol + NADPH + H(+). It catalyses the reaction D-xylose + NADP(+) = D-xylono-1,5-lactone + NADPH + H(+). The protein is Trans-1,2-dihydrobenzene-1,2-diol dehydrogenase (dhdh) of Xenopus tropicalis (Western clawed frog).